The chain runs to 173 residues: Large ribosomal subunit protein bL17 (173 aa).

Residues 136-173 form a disordered region; sequence AEEEAPAVEAEATEATEAPVEEAAAVEAEAPADAEKAE. The span at 138–149 shows a compositional bias: acidic residues; it reads EEAPAVEAEATE. Over residues 150–166 the composition is skewed to low complexity; it reads ATEAPVEEAAAVEAEAP.

Belongs to the bacterial ribosomal protein bL17 family. As to quaternary structure, part of the 50S ribosomal subunit. Contacts protein L32.

The sequence is that of Large ribosomal subunit protein bL17 from Bifidobacterium longum subsp. infantis (strain ATCC 15697 / DSM 20088 / JCM 1222 / NCTC 11817 / S12).